We begin with the raw amino-acid sequence, 799 residues long: Histidine biosynthesis trifunctional protein (799 aa).

The phosphoribosyl-AMP cyclohydrolase stretch occupies residues 1–229 (MVLPILPLID…FIVEQENVGF (229 aa)). Residues 230 to 312 (CHLETMSCFG…FYFALAKLVA (83 aa)) form a phosphoribosyl-ATP pyrophosphohydrolase region. Residues 313-799 (NDVSLKDVEN…KLGLIPKDFQ (487 aa)) are histidinol dehydrogenase. Residues Q618 and H621 each contribute to the Zn(2+) site. Catalysis depends on residues E687 and H688. D721 and H780 together coordinate Zn(2+).

It in the C-terminal section; belongs to the histidinol dehydrogenase family. It depends on Zn(2+) as a cofactor.

It carries out the reaction 1-(5-phospho-beta-D-ribosyl)-5'-AMP + H2O = 1-(5-phospho-beta-D-ribosyl)-5-[(5-phospho-beta-D-ribosylamino)methylideneamino]imidazole-4-carboxamide. The catalysed reaction is 1-(5-phospho-beta-D-ribosyl)-ATP + H2O = 1-(5-phospho-beta-D-ribosyl)-5'-AMP + diphosphate + H(+). The enzyme catalyses L-histidinol + 2 NAD(+) + H2O = L-histidine + 2 NADH + 3 H(+). It participates in amino-acid biosynthesis; L-histidine biosynthesis; L-histidine from 5-phospho-alpha-D-ribose 1-diphosphate: step 2/9. The protein operates within amino-acid biosynthesis; L-histidine biosynthesis; L-histidine from 5-phospho-alpha-D-ribose 1-diphosphate: step 3/9. Its pathway is amino-acid biosynthesis; L-histidine biosynthesis; L-histidine from 5-phospho-alpha-D-ribose 1-diphosphate: step 9/9. In Saccharomyces cerevisiae (strain ATCC 204508 / S288c) (Baker's yeast), this protein is Histidine biosynthesis trifunctional protein.